The primary structure comprises 402 residues: UDP-glucose 6-dehydrogenase (402 aa).

Residues 2 to 19 (KIAV…GVLL), V11, D29, K34, T83, T118, and E145 contribute to the NAD(+) site. Substrate contacts are provided by residues 141 to 145 (EFLRE), K204, N208, 249 to 253 (YNNPS), and G257. An NAD(+)-binding site is contributed by Y259. C260 serves as the catalytic Nucleophile. Residue K263 participates in NAD(+) binding. K320 contacts substrate. R327 contributes to the NAD(+) binding site.

The protein belongs to the UDP-glucose/GDP-mannose dehydrogenase family.

It carries out the reaction UDP-alpha-D-glucose + 2 NAD(+) + H2O = UDP-alpha-D-glucuronate + 2 NADH + 3 H(+). The protein operates within nucleotide-sugar biosynthesis; UDP-alpha-D-glucuronate biosynthesis; UDP-alpha-D-glucuronate from UDP-alpha-D-glucose: step 1/1. Catalyzes the formation of UDP-glucuronic acid which is required for capsular hyaluronic acid synthesis. This chain is UDP-glucose 6-dehydrogenase (hasB), found in Streptococcus pyogenes serotype M3 (strain ATCC BAA-595 / MGAS315).